Reading from the N-terminus, the 434-residue chain is Nicotinate phosphoribosyltransferase (434 aa).

A Phosphohistidine; by autocatalysis modification is found at histidine 242.

The protein belongs to the NAPRTase family. In terms of processing, transiently phosphorylated on a His residue during the reaction cycle. Phosphorylation strongly increases the affinity for substrates and increases the rate of nicotinate D-ribonucleotide production. Dephosphorylation regenerates the low-affinity form of the enzyme, leading to product release.

The catalysed reaction is nicotinate + 5-phospho-alpha-D-ribose 1-diphosphate + ATP + H2O = nicotinate beta-D-ribonucleotide + ADP + phosphate + diphosphate. The protein operates within cofactor biosynthesis; NAD(+) biosynthesis; nicotinate D-ribonucleotide from nicotinate: step 1/1. Functionally, catalyzes the synthesis of beta-nicotinate D-ribonucleotide from nicotinate and 5-phospho-D-ribose 1-phosphate at the expense of ATP. The chain is Nicotinate phosphoribosyltransferase from Allorhizobium ampelinum (strain ATCC BAA-846 / DSM 112012 / S4) (Agrobacterium vitis (strain S4)).